The following is a 456-amino-acid chain: Chromosomal replication initiator protein DnaA 1 (456 aa).

The domain I, interacts with DnaA modulators stretch occupies residues Met-1–Lys-68. The tract at residues Lys-68–Gly-101 is domain II. Residues Asp-102–Val-320 form a domain III, AAA+ region region. Residues Ser-150, Gly-152, Lys-153, and Thr-154 each coordinate ATP. The interval Ala-321 to Asp-456 is domain IV, binds dsDNA.

This sequence belongs to the DnaA family. As to quaternary structure, oligomerizes as a right-handed, spiral filament on DNA at oriC.

The protein resides in the cytoplasm. Plays an essential role in the initiation and regulation of chromosomal replication. ATP-DnaA binds to the origin of replication (oriC) to initiate formation of the DNA replication initiation complex once per cell cycle. Binds the DnaA box (a 9 base pair repeat at the origin) and separates the double-stranded (ds)DNA. Forms a right-handed helical filament on oriC DNA; dsDNA binds to the exterior of the filament while single-stranded (ss)DNA is stabiized in the filament's interior. The ATP-DnaA-oriC complex binds and stabilizes one strand of the AT-rich DNA unwinding element (DUE), permitting loading of DNA polymerase. After initiation quickly degrades to an ADP-DnaA complex that is not apt for DNA replication. Binds acidic phospholipids. This is Chromosomal replication initiator protein DnaA 1 from Chlamydia trachomatis serovar D (strain ATCC VR-885 / DSM 19411 / UW-3/Cx).